A 333-amino-acid chain; its full sequence is L-lactate dehydrogenase B chain (333 aa).

Residues 29-57 (GQVGMACAISILGKGLCDELALVDVLEDK) and Arg-99 contribute to the NAD(+) site. Residues Arg-106, Asn-138, and Arg-169 each coordinate substrate. Residue Asn-138 coordinates NAD(+). His-193 serves as the catalytic Proton acceptor. Thr-248 contacts substrate.

Belongs to the LDH/MDH superfamily. LDH family. Homotetramer.

Its subcellular location is the cytoplasm. It catalyses the reaction (S)-lactate + NAD(+) = pyruvate + NADH + H(+). The protein operates within fermentation; pyruvate fermentation to lactate; (S)-lactate from pyruvate: step 1/1. Functionally, interconverts simultaneously and stereospecifically pyruvate and lactate with concomitant interconversion of NADH and NAD(+). This chain is L-lactate dehydrogenase B chain (LDHB), found in Pelodiscus sinensis japonicus (Chinese soft-shelled turtle).